The sequence spans 353 residues: Photosystem II D2 protein (353 aa).

Threonine 2 bears the N-acetylthreonine mark. Threonine 2 is modified (phosphothreonine). The chain crosses the membrane as a helical span at residues 41–61; that stretch reads CAYFALGGWFTGTTFVTSWYT. Chlorophyll a is bound at residue histidine 118. Residues 125–141 form a helical membrane-spanning segment; sequence GFMLRQFELARSVQLRP. Residues glutamine 130 and asparagine 143 each contribute to the pheophytin a site. The chain crosses the membrane as a helical span at residues 153–166; that stretch reads VFVSVFLIYPLGQS. Residue histidine 198 participates in chlorophyll a binding. The helical transmembrane segment at 208–228 threads the bilayer; the sequence is AALLCAIHGATVENTLFEDGD. Residues histidine 215 and phenylalanine 262 each coordinate a plastoquinone. Histidine 215 contacts Fe cation. Fe cation is bound at residue histidine 269. The helical transmembrane segment at 279–295 threads the bilayer; sequence GLWMSAIGVVGLALNLR.

It belongs to the reaction center PufL/M/PsbA/D family. As to quaternary structure, PSII is composed of 1 copy each of membrane proteins PsbA, PsbB, PsbC, PsbD, PsbE, PsbF, PsbH, PsbI, PsbJ, PsbK, PsbL, PsbM, PsbT, PsbX, PsbY, PsbZ, Psb30/Ycf12, at least 3 peripheral proteins of the oxygen-evolving complex and a large number of cofactors. It forms dimeric complexes. The cofactor is The D1/D2 heterodimer binds P680, chlorophylls that are the primary electron donor of PSII, and subsequent electron acceptors. It shares a non-heme iron and each subunit binds pheophytin, quinone, additional chlorophylls, carotenoids and lipids. There is also a Cl(-1) ion associated with D1 and D2, which is required for oxygen evolution. The PSII complex binds additional chlorophylls, carotenoids and specific lipids..

Its subcellular location is the plastid. The protein resides in the chloroplast thylakoid membrane. The catalysed reaction is 2 a plastoquinone + 4 hnu + 2 H2O = 2 a plastoquinol + O2. Photosystem II (PSII) is a light-driven water:plastoquinone oxidoreductase that uses light energy to abstract electrons from H(2)O, generating O(2) and a proton gradient subsequently used for ATP formation. It consists of a core antenna complex that captures photons, and an electron transfer chain that converts photonic excitation into a charge separation. The D1/D2 (PsbA/PsbD) reaction center heterodimer binds P680, the primary electron donor of PSII as well as several subsequent electron acceptors. D2 is needed for assembly of a stable PSII complex. This Liriodendron tulipifera (Tuliptree) protein is Photosystem II D2 protein.